A 417-amino-acid polypeptide reads, in one-letter code: Blood group Rh(CE) polypeptide (417 aa).

The next 11 helical transmembrane spans lie at 12-32, 44-64, 77-97, 125-145, 172-192, 203-223, 238-258, 265-285, 287-307, 331-351, and 358-378; these read CLPL…YFFT, LVAS…GLGF, VAFN…LDGF, ISAG…MVLV, FYVF…KPLP, TIPS…WPSV, MFNT…GSSL, ISMT…GTSC, LIPS…ISIG, IFSL…VLHT, and MIGF…VIAL.

This sequence belongs to the ammonium transporter (TC 2.A.49) family. Rh subfamily. In terms of assembly, heterotrimer; a RHCE monomer interacts with a RHAG homodimer. Component of the ankyrin-1 complex in the erythrocyte, composed of ANK1, RHCE, RHAG, SLC4A1, EPB42, GYPA, GYPB and AQP1. Interacts (via the N- and C-terminal) with ANK1 (via ANk 1-5 repeats); mediates the primary membrane attachment site for ANK1. In terms of tissue distribution, restricted to tissues or cell lines expressing erythroid characters. Isoform 4g and isoform RhPI-Alpha are expressed in immature erythroblasts but not in mature erythroblasts.

The protein localises to the membrane. In terms of biological role, component of the ankyrin-1 complex, a multiprotein complex involved in the stability and shape of the erythrocyte membrane. Mediates the primary membrane attachment site for ANK1 when associated with RHAG. May participate in the ammonium and carbon dioxide transport through the heterotrimer form. The protein is Blood group Rh(CE) polypeptide of Homo sapiens (Human).